The following is a 785-amino-acid chain: Protein PHTF2 (785 aa).

Positions 46-191 constitute a PHTF domain; sequence IQCLIGAYDQ…VHCQIVSTRT (146 aa). The next 2 membrane-spanning stretches (helical) occupy residues 136–156 and 164–184; these read VIFF…VLFC and IPLT…TVHC. Disordered regions lie at residues 190–239 and 304–401; these read RTPK…GTST and RPEE…PESE. The segment covering 200–209 has biased composition (basic residues); the sequence is GKRRRKLRKA. The segment covering 210 to 219 has biased composition (basic and acidic residues); sequence AHLEVHREGD. 2 stretches are compositionally biased toward polar residues: residues 220-239 and 309-333; these read GSST…GTST and AWNT…VSDE. Asn-329 is a glycosylation site (N-linked (GlcNAc...) asparagine). A compositionally biased stretch (basic residues) spans 359–369; it reads RNRKSHHYKKH. Residues 378–390 show a composition bias toward low complexity; the sequence is SGTSCSSRCSSSR. A compositionally biased stretch (basic and acidic residues) spans 391 to 400; the sequence is QDSESARPES. A run of 4 helical transmembrane segments spans residues 497 to 517, 553 to 573, 634 to 654, and 668 to 688; these read IGYQ…PFVF, VIIS…LLCV, VIVS…CAQL, and WELV…VTLG. N-linked (GlcNAc...) asparagine glycans are attached at residues Asn-697 and Asn-756. Residues 760-780 form a helical membrane-spanning segment; sequence VVILSAVSGVISDLLGFNLKL.

Its subcellular location is the membrane. In Homo sapiens (Human), this protein is Protein PHTF2 (PHTF2).